The sequence spans 356 residues: Nicotinate-nucleotide--dimethylbenzimidazole phosphoribosyltransferase (356 aa).

Catalysis depends on Glu-317, which acts as the Proton acceptor.

This sequence belongs to the CobT family. In terms of assembly, homodimer.

It carries out the reaction 5,6-dimethylbenzimidazole + nicotinate beta-D-ribonucleotide = alpha-ribazole 5'-phosphate + nicotinate + H(+). It functions in the pathway nucleoside biosynthesis; alpha-ribazole biosynthesis; alpha-ribazole from 5,6-dimethylbenzimidazole: step 1/2. Its function is as follows. Catalyzes the synthesis of alpha-ribazole-5'-phosphate from nicotinate mononucleotide (NAMN) and 5,6-dimethylbenzimidazole (DMB). This chain is Nicotinate-nucleotide--dimethylbenzimidazole phosphoribosyltransferase, found in Salmonella typhi.